Reading from the N-terminus, the 274-residue chain is Large ribosomal subunit protein uL2 (274 aa).

Disordered stretches follow at residues serine 40–lysine 59 and valine 223–arginine 274. Basic residues-rich tracts occupy residues valine 49–lysine 59 and tyrosine 256–arginine 274.

Belongs to the universal ribosomal protein uL2 family. As to quaternary structure, part of the 50S ribosomal subunit. Forms a bridge to the 30S subunit in the 70S ribosome.

One of the primary rRNA binding proteins. Required for association of the 30S and 50S subunits to form the 70S ribosome, for tRNA binding and peptide bond formation. It has been suggested to have peptidyltransferase activity; this is somewhat controversial. Makes several contacts with the 16S rRNA in the 70S ribosome. This chain is Large ribosomal subunit protein uL2, found in Acidithiobacillus ferrooxidans (strain ATCC 23270 / DSM 14882 / CIP 104768 / NCIMB 8455) (Ferrobacillus ferrooxidans (strain ATCC 23270)).